A 260-amino-acid chain; its full sequence is Kallikrein-8 (260 aa).

Residues 1 to 28 form the signal peptide; sequence MGRPPPCAIQPWILLLLFMGAWAGLTRA. The propeptide occupies 29 to 32; sequence QGSK. Residues 33-257 enclose the Peptidase S1 domain; sequence ILEGRECIPH…YTTWIKKTMD (225 aa). 6 cysteine pairs are disulfide-bonded: C39/C173, C58/C74, C145/C246, C152/C218, C184/C198, and C208/C233. The active-site Charge relay system is H73. N-linked (GlcNAc...) asparagine glycosylation is present at N110. The Charge relay system role is filled by D120. The active-site Charge relay system is S212.

The protein belongs to the peptidase S1 family. Kallikrein subfamily. Interacts with SPINK9. In terms of tissue distribution, expressed in the limbic system of mouse brain and is localized at highest concentration in pyramidal neurons of the hippocampal CA1-3 subfields. Also detected in spinal cord gray matter and in keratinized stratified epithelia of epidermis, hair, tongue, palate, nasal cavity, pharynges, esophagus and forestomach. In skin and mucus membranes, expressed in stratum spinosum and stratum granulosum. Expressed during estrus in vaginal epithelial cells but not stromal cells. Within the vaginal epithelium, expressed in prickle cells, granular cells and parakeratotic cells but not in basal cells. Not expressed in uterus. Expressed in the keratinocytes.

Its subcellular location is the secreted. The protein resides in the cytoplasm. It catalyses the reaction Cleavage of amide substrates following the basic amino acids Arg or Lys at the P1 position, with a preference for Arg over Lys.. With respect to regulation, strongly inhibited by diisopropyl fluorophosphate, leupeptin and (4-amidinophenyl)methanesulfonyl 1-fluoride. Serine protease which is capable of degrading a number of proteins such as casein, fibrinogen, kininogen, fibronectin and collagen type IV. Also cleaves L1CAM in response to increased neural activity. Induces neurite outgrowth and fasciculation of cultured hippocampal neurons. Plays a role in the formation and maturation of orphan and small synaptic boutons in the Schaffer-collateral pathway, regulates Schaffer-collateral long-term potentiation in the hippocampus and is required for memory acquisition and synaptic plasticity. Involved in skin desquamation and keratinocyte proliferation. Plays a role in the secondary phase of pathogenesis following spinal cord injury. This is Kallikrein-8 (Klk8) from Mus musculus (Mouse).